The following is a 250-amino-acid chain: Glucosamine-6-phosphate deaminase (250 aa).

Asp67 (proton acceptor; for enolization step) is an active-site residue. Asn136 acts as the For ring-opening step in catalysis. His138 (proton acceptor; for ring-opening step) is an active-site residue. Glu143 serves as the catalytic For ring-opening step.

The protein belongs to the glucosamine/galactosamine-6-phosphate isomerase family. NagB subfamily.

The enzyme catalyses alpha-D-glucosamine 6-phosphate + H2O = beta-D-fructose 6-phosphate + NH4(+). It participates in amino-sugar metabolism; N-acetylneuraminate degradation; D-fructose 6-phosphate from N-acetylneuraminate: step 5/5. Functionally, catalyzes the reversible isomerization-deamination of glucosamine 6-phosphate (GlcN6P) to form fructose 6-phosphate (Fru6P) and ammonium ion. The polypeptide is Glucosamine-6-phosphate deaminase (Oceanobacillus iheyensis (strain DSM 14371 / CIP 107618 / JCM 11309 / KCTC 3954 / HTE831)).